The chain runs to 119 residues: Protein TusC (119 aa).

It belongs to the DsrF/TusC family. As to quaternary structure, heterohexamer, formed by a dimer of trimers. The hexameric TusBCD complex contains 2 copies each of TusB, TusC and TusD. The TusBCD complex interacts with TusE.

It is found in the cytoplasm. Part of a sulfur-relay system required for 2-thiolation of 5-methylaminomethyl-2-thiouridine (mnm(5)s(2)U) at tRNA wobble positions. In Pectobacterium atrosepticum (strain SCRI 1043 / ATCC BAA-672) (Erwinia carotovora subsp. atroseptica), this protein is Protein TusC.